The sequence spans 229 residues: Peptidase E (229 aa).

Catalysis depends on charge relay system residues S120, D135, and H157.

Belongs to the peptidase S51 family.

The protein resides in the cytoplasm. The enzyme catalyses Dipeptidase E catalyzes the hydrolysis of dipeptides Asp-|-Xaa. It does not act on peptides with N-terminal Glu, Asn or Gln, nor does it cleave isoaspartyl peptides.. Hydrolyzes dipeptides containing N-terminal aspartate residues. May play a role in allowing the cell to use peptide aspartate to spare carbon otherwise required for the synthesis of the aspartate family of amino acids. This chain is Peptidase E, found in Escherichia coli O6:K15:H31 (strain 536 / UPEC).